A 57-amino-acid polypeptide reads, in one-letter code: Serine protease inhibitor Kazal-type 1 (57 aa).

The 54-residue stretch at 4–57 (LQRQANCNLKVNGCNKIYNPICGSDGITYANECLLCLENKKRQTSILVEKSGPC) folds into the Kazal-like domain. Intrachain disulfides connect Cys-10/Cys-39, Cys-17/Cys-36, and Cys-25/Cys-57.

The protein resides in the secreted. Its function is as follows. Serine protease inhibitor which exhibits anti-trypsin activity. In the pancreas, protects against trypsin-catalyzed premature activation of zymogens. In the male reproductive tract, binds to sperm heads where it modulates sperm capacitance by inhibiting calcium uptake and nitrogen oxide (NO) production. The polypeptide is Serine protease inhibitor Kazal-type 1 (SPINK1) (Canis lupus familiaris (Dog)).